The chain runs to 183 residues: RNA pyrophosphohydrolase (183 aa).

The Nudix hydrolase domain occupies 6–149 (GYRPNVGIIL…KREVYRLALE (144 aa)). The short motif at 38 to 59 (GGINAGETPEQAMFRELEEEVG) is the Nudix box element.

It belongs to the Nudix hydrolase family. RppH subfamily. It depends on a divalent metal cation as a cofactor.

Functionally, accelerates the degradation of transcripts by removing pyrophosphate from the 5'-end of triphosphorylated RNA, leading to a more labile monophosphorylated state that can stimulate subsequent ribonuclease cleavage. The sequence is that of RNA pyrophosphohydrolase from Thiobacillus denitrificans (strain ATCC 25259 / T1).